The chain runs to 226 residues: Cytidylate kinase (226 aa).

Residue 10–18 (GPASSGKST) participates in ATP binding.

Its subcellular location is the cytoplasm. The enzyme catalyses CMP + ATP = CDP + ADP. It carries out the reaction dCMP + ATP = dCDP + ADP. The polypeptide is Cytidylate kinase (Streptococcus pyogenes serotype M6 (strain ATCC BAA-946 / MGAS10394)).